We begin with the raw amino-acid sequence, 301 residues long: tRNA dimethylallyltransferase (301 aa).

ATP is bound at residue 8–15; sequence GPTAVGKT. 10–15 contributes to the substrate binding site; the sequence is TAVGKT. Residues 33-36 form an interaction with substrate tRNA region; the sequence is DSRQ.

This sequence belongs to the IPP transferase family. Monomer. The cofactor is Mg(2+).

It carries out the reaction adenosine(37) in tRNA + dimethylallyl diphosphate = N(6)-dimethylallyladenosine(37) in tRNA + diphosphate. Its function is as follows. Catalyzes the transfer of a dimethylallyl group onto the adenine at position 37 in tRNAs that read codons beginning with uridine, leading to the formation of N6-(dimethylallyl)adenosine (i(6)A). The polypeptide is tRNA dimethylallyltransferase (Thermosipho melanesiensis (strain DSM 12029 / CIP 104789 / BI429)).